The primary structure comprises 1025 residues: Protein mono-ADP-ribosyltransferase PARP10 (1025 aa).

A Phosphothreonine modification is found at Thr-101. The residue at position 106 (Glu-106) is an ADP-ribosyl glutamic acid. At Lys-140 the chain carries N6-(ADP-ribosyl)lysine. Positions 318-346 (GIMTTGSGQEPGQSGTSLRTGPMGSLGQA) are disordered. The span at 321–336 (TTGSGQEPGQSGTSLR) shows a compositional bias: polar residues. Phosphoserine is present on residues Ser-378, Ser-423, and Ser-431. 2 disordered regions span residues 569-589 (VLPGNAHTLWTPDSTGGDQED) and 617-644 (LEEEGPQEQPEEEVTPGHEEEEPVAPST). The span at 617–639 (LEEEGPQEQPEEEVTPGHEEEEP) shows a compositional bias: acidic residues. 2 consecutive short sequence motifs (ubiquitin-interacting) follow at residues 650-667 (LEEEAALQLALHRSLEPQ) and 673-690 (QEEAAALRQALTLSLLEQ). At Ser-663 the chain carries Phosphoserine. A myc binding region spans residues 700 to 907 (DGGTDGKAQL…CAHGFNRSFC (208 aa)). The PARP catalytic domain occupies 806-1025 (PTLAGQTLKG…SGLPGRSPDT (220 aa)). A PIP-box motif is present at residues 831–838 (QEVVRAFY). Glu-882 bears the ADP-ribosyl glutamic acid mark. The residue at position 916 (Lys-916) is an N6-(ADP-ribosyl)lysine. At Lys-916 the chain carries N6-acetyllysine. The segment at 1006–1025 (HVPRASPDDPSGLPGRSPDT) is disordered. Position 1011 is a phosphoserine (Ser-1011).

The protein belongs to the ARTD/PARP family. As to quaternary structure, interacts with MYC. Interacts with PARP14. Interacts (via-PIP box and ubiquitin-interacting motifs) with PCNA. Post-translationally, stimulated through its phosphorylation by CDK2. Acquires CDK-dependent phosphorylation through late-G1 to S phase, and from prometaphase to cytokinesis in the nucleolar organizing regions. Phosphorylation is suppressed in growth-arrested cells. In terms of processing, auto-mono-ADP-ribosylated on glutamate and lysine residues. As to expression, highly expressed in spleen and thymus. Intermediate levels in liver, kidney, pancreas, prostate, testis, ovary, intestine, and leukocytes. Low expression in heart, brain, placenta, lung, skeletal muscle, and colon.

The protein resides in the nucleus. Its subcellular location is the nucleolus. It localises to the cytoplasm. The enzyme catalyses L-lysyl-[protein] + NAD(+) = N(6)-(ADP-D-ribosyl)-L-lysyl-[protein] + nicotinamide + H(+). The catalysed reaction is L-aspartyl-[protein] + NAD(+) = 4-O-(ADP-D-ribosyl)-L-aspartyl-[protein] + nicotinamide. It carries out the reaction L-glutamyl-[protein] + NAD(+) = 5-O-(ADP-D-ribosyl)-L-glutamyl-[protein] + nicotinamide. ADP-ribosyltransferase that mediates mono-ADP-ribosylation of glutamate and aspartate residues on target proteins. In contrast to PARP1 and PARP2, it is not able to mediate poly-ADP-ribosylation. Catalyzes mono-ADP-ribosylation of GSK3B, leading to negatively regulate GSK3B kinase activity. Involved in translesion DNA synthesis in response to DNA damage via its interaction with PCNA. In Homo sapiens (Human), this protein is Protein mono-ADP-ribosyltransferase PARP10.